A 619-amino-acid chain; its full sequence is uncharacterized protein (619 aa).

The first 21 residues, M1–T21, serve as a signal peptide directing secretion.

This is an uncharacterized protein from Archaeoglobus fulgidus (strain ATCC 49558 / DSM 4304 / JCM 9628 / NBRC 100126 / VC-16).